The sequence spans 121 residues: Snaclec coagulation factor IX-binding protein subunit A (121 aa).

The region spanning 1–120 (YEGHCYQTFK…CGERNPFVCE (120 aa)) is the C-type lectin domain. 2 disulfide bridges follow: cysteine 22/cysteine 119 and cysteine 94/cysteine 111. Positions 33, 35, and 39 each coordinate Ca(2+). Residue glutamate 120 coordinates Ca(2+).

This sequence belongs to the snaclec family. In terms of assembly, heterodimer of subunits A and B; disulfide-linked. As to expression, expressed by the venom gland.

It is found in the secreted. Functionally, anticoagulant protein which binds to the gamma-carboxyglutamic acid-domain regions of factor IX (F9) (but not factor X) in the presence of calcium with a 1 to 1 stoichiometry. In Gloydius halys (Chinese water mocassin), this protein is Snaclec coagulation factor IX-binding protein subunit A.